A 1358-amino-acid chain; its full sequence is Mediator of RNA polymerase II transcription subunit 12 (1358 aa).

Residues 629 to 654 (VRYNYEQLQIQLNTAKEQMLQEQFEH) are a coiled coil.

The protein belongs to the Mediator complex subunit 12 family. Component of the SRB8-11 complex, which itself associates with the Mediator complex.

The protein localises to the nucleus. Its function is as follows. Component of the SRB8-11 complex. The SRB8-11 complex is a regulatory module of the Mediator complex which is itself involved in regulation of basal and activated RNA polymerase II-dependent transcription. The SRB8-11 complex may be involved in the transcriptional repression of a subset of genes regulated by Mediator. It may inhibit the association of the Mediator complex with RNA polymerase II to form the holoenzyme complex. This chain is Mediator of RNA polymerase II transcription subunit 12 (SRB8), found in Eremothecium gossypii (strain ATCC 10895 / CBS 109.51 / FGSC 9923 / NRRL Y-1056) (Yeast).